A 398-amino-acid chain; its full sequence is Cathepsin E (398 aa).

An N-terminal signal peptide occupies residues 1 to 21; the sequence is MKPLFVLLLLLLLLDLAQAQG. Residues 22–58 constitute a propeptide, activation peptide; that stretch reads VLHRVPLRRHQSLRKKLRAQGQLSDFWRSHNLDMIEF. A Peptidase A1 domain is found at 80-394; the sequence is YFGTVSIGSP…DRGNNQVGLA (315 aa). Asn-92 carries an N-linked (GlcNAc...) asparagine glycan. The active site involves Asp-98. 2 disulfide bridges follow: Cys-111-Cys-116 and Cys-274-Cys-278. Asp-283 is a catalytic residue.

Belongs to the peptidase A1 family. In terms of assembly, homodimer; disulfide-linked. Post-translationally, glycosylated. The nature of the carbohydrate chain varies between cell types. In brain microglia, the proenzyme contains a high mannose-type oligosaccharide, while the mature enzyme contains a complex-type oligosaccharide. In stomach and spleen, the mature enzyme contains a high mannose-type oligosaccharide. In erythrocyte membranes, the mature enzyme contains a complex-type oligosaccharide. As to expression, expressed abundantly in lymphocytes and macrophages of the thymus and spleen, and in the M cells of the intestine. In the brain, expression is limited to reactive microglial cells, the large pyrimidial neurons in the cerebral cortex, the CA1 and CA3 pyrimidial neurons of the hippocampus, the large neurons of the neostriatum, and the Purkinje neurons of the cerebellum.

It is found in the endosome. The enzyme catalyses Similar to cathepsin D, but slightly broader specificity.. Functionally, may have a role in immune function. Probably involved in the processing of antigenic peptides during MHC class II-mediated antigen presentation. May play a role in activation-induced lymphocyte depletion in the thymus, and in neuronal degeneration and glial cell activation in the brain. The protein is Cathepsin E (Ctse) of Rattus norvegicus (Rat).